A 284-amino-acid polypeptide reads, in one-letter code: Alpha-S1-casein (284 aa).

An N-terminal signal peptide occupies residues 1-15 (MKLLILTCLVAAALA). 2 disordered regions span residues 21–44 (RRNA…IVKQ) and 78–111 (SSAE…SATE). 2 stretches are compositionally biased toward low complexity: residues 24–36 (AVSS…NSSS) and 78–99 (SSAE…SSSS). Serine 79, serine 93, serine 94, serine 95, serine 96, serine 97, serine 98, and serine 99 each carry phosphoserine. 10 consecutive repeat copies span residues 138–143 (LLQQAS), 144–149 (LAQQAS), 150–155 (LAQQAS), 156–161 (LAQQAL), 162–167 (LAQQPS), 168–173 (LAQQAA), 174–179 (LAQQAS), 180–185 (LAQQAS), 186–191 (LAQQAS), and 192–197 (LAQKHH). Positions 138–197 (LLQQASLAQQASLAQQASLAQQALLAQQPSLAQQAALAQQASLAQQASLAQQASLAQKHH) are 10 X 6 AA tandem repeats.

Belongs to the alpha-casein family. Mammary gland specific. Secreted in milk.

The protein localises to the secreted. Functionally, important role in the capacity of milk to transport calcium phosphate. In Rattus norvegicus (Rat), this protein is Alpha-S1-casein (Csn1s1).